A 153-amino-acid chain; its full sequence is Endoribonuclease YbeY (153 aa).

Histidine 114, histidine 118, and histidine 124 together coordinate Zn(2+).

It belongs to the endoribonuclease YbeY family. The cofactor is Zn(2+).

It is found in the cytoplasm. Single strand-specific metallo-endoribonuclease involved in late-stage 70S ribosome quality control and in maturation of the 3' terminus of the 16S rRNA. This Shewanella baltica (strain OS185) protein is Endoribonuclease YbeY.